A 363-amino-acid chain; its full sequence is MGSSFGDLFRISTFGESHGGGVGVILEGCPPRLAIDVDAIQAELDRRRPGQSKITTPRNEVDQVEILSGLVDNKTLGTPISMVVRNKDFRPNDYGEMQNIFRPSHADGTYHLKYGVQAASGGGRASARETIGRVAAGAIAKQLLRKVNQTEVLAWVKRIHTIEADVDPNSVQIKDIESNIVRCPDPKIAKLMVERIEEVSRDGDSCGGVIECIVRNPPAGLGMPVFDKLEADLAKALMSLPASKGFEIGSGFSGTFLKGSEHNDAFIPSGKGILRTATNNSGGIQGGISNGELIVLRVAFKPTATIRKDQKTVDSDGKERTLSAKGRHDPCVLPRAVPMVESMVALVLADHLLRQQGQCGLWQ.

Arg47 contributes to the NADP(+) binding site. Residues 124 to 126, Gly286, 301 to 305, and Arg327 contribute to the FMN site; these read RAS and KPTAT.

Belongs to the chorismate synthase family. Homotetramer. FMNH2 serves as cofactor.

The catalysed reaction is 5-O-(1-carboxyvinyl)-3-phosphoshikimate = chorismate + phosphate. It functions in the pathway metabolic intermediate biosynthesis; chorismate biosynthesis; chorismate from D-erythrose 4-phosphate and phosphoenolpyruvate: step 7/7. In terms of biological role, catalyzes the anti-1,4-elimination of the C-3 phosphate and the C-6 proR hydrogen from 5-enolpyruvylshikimate-3-phosphate (EPSP) to yield chorismate, which is the branch point compound that serves as the starting substrate for the three terminal pathways of aromatic amino acid biosynthesis. This reaction introduces a second double bond into the aromatic ring system. The polypeptide is Chorismate synthase (Prochlorococcus marinus (strain MIT 9211)).